The following is a 93-amino-acid chain: Translation initiation factor IF-1 (93 aa).

An S1-like domain is found at 1–72 (MAKEELIQFE…EKGRLIFRHK (72 aa)). Positions 70-93 (RHKDERPGGPPRSGPPRGGQFRRR) are disordered.

The protein belongs to the IF-1 family. As to quaternary structure, component of the 30S ribosomal translation pre-initiation complex which assembles on the 30S ribosome in the order IF-2 and IF-3, IF-1 and N-formylmethionyl-tRNA(fMet); mRNA recruitment can occur at any time during PIC assembly.

The protein resides in the cytoplasm. One of the essential components for the initiation of protein synthesis. Stabilizes the binding of IF-2 and IF-3 on the 30S subunit to which N-formylmethionyl-tRNA(fMet) subsequently binds. Helps modulate mRNA selection, yielding the 30S pre-initiation complex (PIC). Upon addition of the 50S ribosomal subunit IF-1, IF-2 and IF-3 are released leaving the mature 70S translation initiation complex. This Nitrobacter winogradskyi (strain ATCC 25391 / DSM 10237 / CIP 104748 / NCIMB 11846 / Nb-255) protein is Translation initiation factor IF-1.